The primary structure comprises 209 residues: Glycerol-3-phosphate acyltransferase (209 aa).

5 helical membrane-spanning segments follow: residues Ile7–Val27, Ala85–Phe105, Val117–Ala137, Ile142–Ala162, and Met166–His183.

This sequence belongs to the PlsY family. As to quaternary structure, probably interacts with PlsX.

It localises to the cell inner membrane. It catalyses the reaction an acyl phosphate + sn-glycerol 3-phosphate = a 1-acyl-sn-glycero-3-phosphate + phosphate. It participates in lipid metabolism; phospholipid metabolism. Functionally, catalyzes the transfer of an acyl group from acyl-phosphate (acyl-PO(4)) to glycerol-3-phosphate (G3P) to form lysophosphatidic acid (LPA). This enzyme utilizes acyl-phosphate as fatty acyl donor, but not acyl-CoA or acyl-ACP. In Hydrogenovibrio crunogenus (strain DSM 25203 / XCL-2) (Thiomicrospira crunogena), this protein is Glycerol-3-phosphate acyltransferase.